The following is a 73-amino-acid chain: Putative membrane protein insertion efficiency factor (73 aa).

The protein belongs to the UPF0161 family.

The protein localises to the cell inner membrane. Functionally, could be involved in insertion of integral membrane proteins into the membrane. The protein is Putative membrane protein insertion efficiency factor of Treponema denticola (strain ATCC 35405 / DSM 14222 / CIP 103919 / JCM 8153 / KCTC 15104).